We begin with the raw amino-acid sequence, 298 residues long: Serpentine receptor class delta-34 (298 aa).

A run of 6 helical transmembrane segments spans residues Ser-10 to Val-30, Ala-54 to Pro-74, Met-99 to Tyr-119, Leu-158 to Ile-178, Leu-207 to Ile-227, and Val-242 to Ile-262.

The protein belongs to the nematode receptor-like protein srd family.

The protein resides in the membrane. In Caenorhabditis elegans, this protein is Serpentine receptor class delta-34 (srd-34).